Reading from the N-terminus, the 162-residue chain is Catabolic 3-dehydroquinase (162 aa).

The active-site Proton acceptor is Tyr-24. Residues Asn-88, His-94, and Asp-101 each coordinate substrate. His-114 serves as the catalytic Proton donor. Substrate is bound by residues 115-116 (VS) and Arg-125.

It belongs to the type-II 3-dehydroquinase family. As to quaternary structure, homododecamer. Adopts a ring-like structure, composed of an arrangement of two hexameric rings stacked on top of one another.

The catalysed reaction is 3-dehydroquinate = 3-dehydroshikimate + H2O. It functions in the pathway aromatic compound metabolism; 3,4-dihydroxybenzoate biosynthesis; 3,4-dihydroxybenzoate from 3-dehydroquinate: step 1/2. Is involved in the catabolism of quinate. Allows the utilization of quinate as carbon source via the beta-ketoadipate pathway. The protein is Catabolic 3-dehydroquinase of Podospora anserina (strain S / ATCC MYA-4624 / DSM 980 / FGSC 10383) (Pleurage anserina).